The primary structure comprises 316 residues: Ribosomal RNA large subunit methyltransferase F (316 aa).

Belongs to the methyltransferase superfamily. METTL16/RlmF family.

The protein resides in the cytoplasm. It carries out the reaction adenosine(1618) in 23S rRNA + S-adenosyl-L-methionine = N(6)-methyladenosine(1618) in 23S rRNA + S-adenosyl-L-homocysteine + H(+). In terms of biological role, specifically methylates the adenine in position 1618 of 23S rRNA. This Pseudomonas putida (strain W619) protein is Ribosomal RNA large subunit methyltransferase F.